The following is a 384-amino-acid chain: V-type proton ATPase subunit C (384 aa).

It belongs to the V-ATPase C subunit family. V-ATPase is a heteromultimeric enzyme made up of two complexes: the ATP-hydrolytic V1 complex and the proton translocation V0 complex. The V1 complex consists of three catalytic AB heterodimers that form a heterohexamer, three peripheral stalks each consisting of EG heterodimers, one central rotor including subunits D and F, and the regulatory subunits C and H. The proton translocation complex V0 consists of the proton transport subunit a, a ring of proteolipid subunits c9c'', rotary subunit d, subunits e and f, and the accessory subunits vah-19/Ac45 and vah-20/PRR. Interacts with V-type proton ATPase subunits a1 unc-32, a2 vha-5 and a3 vha-6. As to expression, expressed ubiquitously; higher levels are found in gastrointestinal and hypodermal cells, as well as H-shaped excretory cell.

The protein localises to the cytoplasm. It is found in the membrane. Its function is as follows. Subunit of the V1 complex of vacuolar(H+)-ATPase (V-ATPase), a multisubunit enzyme composed of a peripheral complex (V1) that hydrolyzes ATP and a membrane integral complex (V0) that translocates protons. V-ATPase is responsible for acidifying and maintaining the pH of intracellular compartments and in some cell types, is targeted to the plasma membrane, where it is responsible for acidifying the extracellular environment. Subunit C is necessary for the assembly of the catalytic sector of the enzyme and is likely to have a specific function in its catalytic activity. Has roles in embryogenesis and ovulation. This chain is V-type proton ATPase subunit C, found in Caenorhabditis elegans.